A 229-amino-acid polypeptide reads, in one-letter code: Heptaprenylglyceryl phosphate synthase (229 aa).

Sn-glycerol 1-phosphate is bound at residue lysine 12. Mg(2+) contacts are provided by aspartate 14 and threonine 40. Sn-glycerol 1-phosphate is bound by residues 159–164 (YIEYSG), glycine 189, and 209–210 (GN).

Belongs to the GGGP/HepGP synthase family. Group I subfamily. As to quaternary structure, homodimer. Requires Mg(2+) as cofactor.

The catalysed reaction is sn-glycerol 1-phosphate + all-trans-heptaprenyl diphosphate = 3-heptaprenyl-sn-glycero-1-phosphate + diphosphate. It participates in membrane lipid metabolism; glycerophospholipid metabolism. Functionally, prenyltransferase that catalyzes in vivo the transfer of the heptaprenyl moiety of heptaprenyl pyrophosphate (HepPP; 35 carbon atoms) to the C3 hydroxyl of sn-glycerol-1-phosphate (G1P), producing heptaprenylglyceryl phosphate (HepGP). This reaction is an ether-bond-formation step in the biosynthesis of archaea-type G1P-based membrane lipids found in Bacillales. The protein is Heptaprenylglyceryl phosphate synthase of Staphylococcus saprophyticus subsp. saprophyticus (strain ATCC 15305 / DSM 20229 / NCIMB 8711 / NCTC 7292 / S-41).